Consider the following 701-residue polypeptide: Ephexin-1 (701 aa).

2 stretches are compositionally biased toward basic and acidic residues: residues 1–11 (METKNSEDQGK) and 26–48 (GPAE…EEPR). Residues 1 to 141 (METKNSEDQG…TPEECPALTD (141 aa)) are disordered. The regulatory region; modulates activity toward RHOA, RAC1 and CDC42 stretch occupies residues 1–264 (METKNSEDQG…LDILQPEETK (264 aa)). Residues 120-132 (ASESSSTPGNGTT) are compositionally biased toward polar residues. Tyr-172 carries the phosphotyrosine modification. Positions 187-226 (RRQQDAEIQGNSDGSQAGEDNAEEEEEEEEEPASPPERRA) are disordered. Residues 206 to 218 (DNAEEEEEEEEEP) are compositionally biased toward acidic residues. The 185-residue stretch at 264–448 (KLQEAMFELV…EMVVKACNEG (185 aa)) folds into the DH domain. In terms of domain architecture, PH spans 480 to 592 (WLLKQGELQQ…WMTSLAPNRR (113 aa)). The SH3 domain maps to 603-664 (LDCPQVQCVH…PSSMTEEILN (62 aa)). Positions 679-690 (HKMEDPQRSQNK) are enriched in basic and acidic residues. A disordered region spans residues 679 to 701 (HKMEDPQRSQNKDRRKLGSRNRQ). The span at 691–701 (DRRKLGSRNRQ) shows a compositional bias: basic residues.

Interacts with CDK5R1 and EPHA4; activated by EPHA4 through the CDK5 kinase. Post-translationally, phosphorylation by CDK5 upon EPHA4 activation by EFNA1 may regulate dendritic spine morphogenesis. Src-dependent phosphorylation at Tyr-172 upon EPHA4 activation increases the guanine exchange factor activity toward RHOA. In terms of tissue distribution, expressed in telencephalic neurons (at protein level). Expressed in brain, spinal cord and testis.

The protein localises to the cytoplasm. Its subcellular location is the membrane. The protein resides in the cell projection. It localises to the growth cone. Acts as a guanine nucleotide exchange factor (GEF) which differentially activates the GTPases RHOA, RAC1 and CDC42. Plays a role in axon guidance regulating ephrin-induced growth cone collapse and dendritic spine morphogenesis. Upon activation by ephrin through EPHA4, the GEF activity switches toward RHOA resulting in its activation. Activated RHOA promotes cone retraction at the expense of RAC1- and CDC42-stimulated growth cone extension. This chain is Ephexin-1 (Ngef), found in Rattus norvegicus (Rat).